A 218-amino-acid polypeptide reads, in one-letter code: Octanoyltransferase (218 aa).

In terms of domain architecture, BPL/LPL catalytic spans 31-207; it reads AQTPDELWLL…QLAAQLGYAE (177 aa). Residues 70–77, 137–139, and 150–152 each bind substrate; these read RGGQVTYH, SLG, and GLA. The active-site Acyl-thioester intermediate is the Cys168.

It belongs to the LipB family.

It is found in the cytoplasm. It carries out the reaction octanoyl-[ACP] + L-lysyl-[protein] = N(6)-octanoyl-L-lysyl-[protein] + holo-[ACP] + H(+). It participates in protein modification; protein lipoylation via endogenous pathway; protein N(6)-(lipoyl)lysine from octanoyl-[acyl-carrier-protein]: step 1/2. Catalyzes the transfer of endogenously produced octanoic acid from octanoyl-acyl-carrier-protein onto the lipoyl domains of lipoate-dependent enzymes. Lipoyl-ACP can also act as a substrate although octanoyl-ACP is likely to be the physiological substrate. This Azotobacter vinelandii (strain DJ / ATCC BAA-1303) protein is Octanoyltransferase.